The chain runs to 116 residues: MEIPENIQHQLNQFQQLQQQAQAVTMQIQNVEVQIQESETALEELNKTDENAEVFKQAGNLLIKVDYAQAVEDMNEKLETLKLRKQTMARQEERVMKKLEEMQTNIQAAMQGLQGE.

The protein belongs to the prefoldin subunit beta family. As to quaternary structure, heterohexamer of two alpha and four beta subunits.

It is found in the cytoplasm. Molecular chaperone capable of stabilizing a range of proteins. Seems to fulfill an ATP-independent, HSP70-like function in archaeal de novo protein folding. In Methanobrevibacter smithii (strain ATCC 35061 / DSM 861 / OCM 144 / PS), this protein is Prefoldin subunit beta.